A 553-amino-acid chain; its full sequence is Putative transport protein AHA_3492 (553 aa).

Transmembrane regions (helical) follow at residues 4–24, 29–49, 65–85, 95–115, and 158–178; these read IALSISMLSLVAVLGLWLGNW, VGLGIGGVLFGGIIVGHFAGL, FGLILFVYTIGIQVGPGFFSS, GFAALLVLLGCAVAAALHQLF, and MGYAVAYPFGICGILLTMWLI. 2 consecutive RCK C-terminal domains span residues 191 to 276 and 279 to 361; these read AQFE…VLGE and ETSL…VVGN. Helical transmembrane passes span 371-391, 403-425, 439-459, 465-485, 493-513, and 533-553; these read MLPVFIGIGLGVLLGSIPFYL, AGGPLVVALILSRIGSIGKLYWF, IVLFLAVVGFKSGAGFIDTLI, AWMMYGVAITLIPLLVVGVLA, YLTLCGLLAGSMTDPPALAFA, and LVMFLRIISPQLLAILLWAGA.

It belongs to the AAE transporter (TC 2.A.81) family. YidE subfamily.

It is found in the cell membrane. The chain is Putative transport protein AHA_3492 from Aeromonas hydrophila subsp. hydrophila (strain ATCC 7966 / DSM 30187 / BCRC 13018 / CCUG 14551 / JCM 1027 / KCTC 2358 / NCIMB 9240 / NCTC 8049).